Here is a 266-residue protein sequence, read N- to C-terminus: MSKSQPHKARKRFGQNFLHDHGVIRRIVACIGPKKGQRIVEIGPGKGALTEGIISVTERMDVVELDRDLIPILKVNLFRFPELTVHEADAMKFDFTSLTTPEQAIRVVGNLPYNISTPLIFHLLSQAQAIEDMHFMLQKEVVDRLAARPGDSLYGRLSVMAQYYCAVESLFIVGPESFDPAPKVDSAIVRMTPHKILPHPVNNIKMLEDMVRIGFQQRRKTLRNNYKGVLDNDDFSALNIDPTLRPERLDVEDFVRIANYVIKKEG.

S-adenosyl-L-methionine-binding residues include Asn-16, Leu-18, Gly-43, Glu-64, Asp-89, and Asn-110.

It belongs to the class I-like SAM-binding methyltransferase superfamily. rRNA adenine N(6)-methyltransferase family. RsmA subfamily.

Its subcellular location is the cytoplasm. It carries out the reaction adenosine(1518)/adenosine(1519) in 16S rRNA + 4 S-adenosyl-L-methionine = N(6)-dimethyladenosine(1518)/N(6)-dimethyladenosine(1519) in 16S rRNA + 4 S-adenosyl-L-homocysteine + 4 H(+). Specifically dimethylates two adjacent adenosines (A1518 and A1519) in the loop of a conserved hairpin near the 3'-end of 16S rRNA in the 30S particle. May play a critical role in biogenesis of 30S subunits. This chain is Ribosomal RNA small subunit methyltransferase A, found in Marinomonas sp. (strain MWYL1).